The sequence spans 246 residues: Phosphomannomutase 2 (246 aa).

A2 carries the post-translational modification N-acetylalanine. D12 acts as the Nucleophile in catalysis. Positions 12 and 14 each coordinate Mg(2+). Residue D14 is the Proton donor/acceptor of the active site. Alpha-D-mannose 1-phosphate-binding residues include R21, R123, R134, and R141. The residue at position 149 (K149) is an N6-acetyllysine. S179 and D181 together coordinate alpha-D-mannose 1-phosphate. Mg(2+)-binding residues include D209, F221, D223, and T226.

The protein belongs to the eukaryotic PMM family. In terms of assembly, homodimer.

The protein resides in the cytoplasm. It catalyses the reaction alpha-D-mannose 1-phosphate = D-mannose 6-phosphate. It functions in the pathway nucleotide-sugar biosynthesis; GDP-alpha-D-mannose biosynthesis; alpha-D-mannose 1-phosphate from D-fructose 6-phosphate: step 2/2. Functionally, involved in the synthesis of the GDP-mannose and dolichol-phosphate-mannose required for a number of critical mannosyl transfer reactions. The chain is Phosphomannomutase 2 (PMM2) from Macaca fascicularis (Crab-eating macaque).